Here is a 345-residue protein sequence, read N- to C-terminus: tRNA N6-adenosine threonylcarbamoyltransferase (345 aa).

2 residues coordinate Fe cation: H111 and H115. Substrate contacts are provided by residues 134 to 138 (LVSGG), D167, G180, and N277. D305 contacts Fe cation.

This sequence belongs to the KAE1 / TsaD family. The cofactor is Fe(2+).

It is found in the cytoplasm. The enzyme catalyses L-threonylcarbamoyladenylate + adenosine(37) in tRNA = N(6)-L-threonylcarbamoyladenosine(37) in tRNA + AMP + H(+). Required for the formation of a threonylcarbamoyl group on adenosine at position 37 (t(6)A37) in tRNAs that read codons beginning with adenine. Is involved in the transfer of the threonylcarbamoyl moiety of threonylcarbamoyl-AMP (TC-AMP) to the N6 group of A37, together with TsaE and TsaB. TsaD likely plays a direct catalytic role in this reaction. This is tRNA N6-adenosine threonylcarbamoyltransferase from Laribacter hongkongensis (strain HLHK9).